The primary structure comprises 284 residues: Ubiquinone biosynthesis protein COQ4, mitochondrial (284 aa).

Residues histidine 165, aspartate 166, histidine 169, and glutamate 181 each contribute to the Zn(2+) site.

Belongs to the COQ4 family. As to quaternary structure, component of a multi-subunit COQ enzyme complex, composed of at least COQ3, COQ4, COQ5, COQ6, COQ7 and COQ9. Zn(2+) serves as cofactor.

It localises to the mitochondrion inner membrane. The catalysed reaction is a 4-hydroxy-3-methoxy-5-(all-trans-polyprenyl)benzoate + H(+) = a 2-methoxy-6-(all-trans-polyprenyl)phenol + CO2. The protein operates within cofactor biosynthesis; ubiquinone biosynthesis. Functionally, lyase that catalyzes the C1-decarboxylation of 4-hydroxy-3-methoxy-5-(all-trans-polyprenyl)benzoic acid into 2-methoxy-6-(all-trans-polyprenyl)phenol during ubiquinone biosynthesis. This Blastomyces gilchristii (strain SLH14081) (Blastomyces dermatitidis) protein is Ubiquinone biosynthesis protein COQ4, mitochondrial.